Consider the following 116-residue polypeptide: Transcription elongation factor SPT4 homolog 2 (116 aa).

The C4-type zinc finger occupies 19–39 (CLRCRLVKTYDQFRDAGCENC).

Belongs to the SPT4 family.

It localises to the nucleus. May regulate transcription elongation by RNA polymerase II. May enhance transcriptional pausing at sites proximal to the promoter, which may in turn facilitate the assembly of an elongation competent RNA polymerase II complex. This is Transcription elongation factor SPT4 homolog 2 from Arabidopsis thaliana (Mouse-ear cress).